A 1262-amino-acid chain; its full sequence is Synaptopodin-2 (1262 aa).

The interval 1–174 is interaction with VPS18; the sequence is MGTGDFICIS…PGSQEGHLVE (174 aa). The region spanning 6-88 is the PDZ domain; it reads FICISMTGGA…SLHLLIKRPT (83 aa). Composition is skewed to polar residues over residues 89 to 105 and 246 to 260; these read SGTS…TNHQ and TSLT…SSGR. 2 disordered regions span residues 89–114 and 239–276; these read SGTS…GPME and PAPE…TGLP. 3 positions are modified to phosphoserine: Ser304, Ser323, and Ser324. Residues 323–363 form a disordered region; that stretch reads SSEGTEQGEDQRSGKDQGRPHKHRARHARLRRSESLSEKQV. The residue at position 327 (Thr327) is a Phosphothreonine. Residues 331–341 are compositionally biased toward basic and acidic residues; the sequence is EDQRSGKDQGR. Residues 342–352 are compositionally biased toward basic residues; the sequence is PHKHRARHARL. A compositionally biased stretch (basic and acidic residues) spans 353–363; that stretch reads RRSESLSEKQV. Residues 392-400 carry the Nuclear localization signal motif; that stretch reads KKRRRRARK. Interaction with ACTN2 stretches follow at residues 477 to 658, 659 to 922, and 899 to 1153; these read MEML…FYDS, SEQI…PPVA, and QSPT…NIEE. Disordered regions lie at residues 503–576 and 592–703; these read AQNE…GPQR and NQTA…SPNP. Ser518, Ser543, Ser544, Ser546, and Ser549 each carry phosphoserine. 2 F-actin binding regions span residues 530–658 and 659–801; these read TSYQ…FYDS and SEQI…VTAV. Low complexity predominate over residues 540–552; that stretch reads RMQSSVSESSFQM. Positions 554 to 560 are interaction with YWHAB; that stretch reads RSLGSVP. Ser558 bears the Phosphoserine; by PKA mark. 2 stretches are compositionally biased toward polar residues: residues 558–569 and 592–606; these read SVPQQNGFSGVS and NQTA…SVTS. At Ser599 the chain carries Phosphoserine. Positions 602–809 are interaction with YWHAB; sequence QSVTSPIPDF…AVSSIKIAQP (208 aa). Phosphothreonine; by PKA and CaMK2 is present on Thr605. The residue at position 606 (Ser606) is a Phosphoserine. Pro residues-rich tracts occupy residues 609-625 and 639-650; these read PDFP…PPPE and AQPPPWPQPAPW. An interaction with BAG3 region spans residues 610 to 621; it reads DFPAPPPYSAVS. The PPPY motif signature appears at 614–617; sequence PPPY. A Phosphotyrosine modification is found at Tyr617. Ser621 is modified (phosphoserine). The segment at 659-914 is F-actin bundling activity; that stretch reads SEQIASRDER…LPASWKYSSN (256 aa). Residues Ser700 and Ser724 each carry the phosphoserine modification. 2 disordered regions span residues 741 to 799 and 833 to 868; these read MQSS…PQVT and VVSH…GMSG. The interval 745–898 is actin binding; sequence AKQKTPPPVA…DTVQAHTVRA (154 aa). At Thr749 the chain carries Phosphothreonine. The segment covering 756–782 has biased composition (low complexity); that stretch reads KPAVKTSSSSQPVAPVSPVWSPGVAPA. Phosphoserine occurs at positions 772 and 776. The span at 786 to 799 shows a compositional bias: polar residues; sequence AFSTTNPPNPPQVT. The tract at residues 808-1153 is interaction with FLNC; that stretch reads QPTCPPARPA…EAFRPRNIEE (346 aa). A phosphoserine mark is found at Ser900, Ser904, and Ser908. Positions 933–957 are disordered; it reads LAAIKSQPPGAQASKTSKKKGKKPL. Residues 999 to 1018 are interaction with ZYX; sequence PAMKQALPPRQADIGSPTNA. Phosphoserine is present on residues Ser1014, Ser1055, and Ser1090.

It belongs to the synaptopodin family. As to quaternary structure, may self-associate in muscle cells under oxidative stress. Binds F-actin. Interacts with ACTN2; ACTN2 is proposed to anchor SYOP2 at Z lines in mature myocytes. Interacts with AKAP6, PPP3CA and CAMK2A. Interacts (phosphorylated form) with YWHAB; YWHAB competes with ACTN2 for interaction with SYNPO2. Interacts with KPNA2; mediating nuclear import of SYNOP2; dependent on interaction with YWHAB. Interacts with IPO13; may be implicated in SYNOP2 nuclear import. Interacts with ZYX, FLNC, ILK. Interacts with BAG3 (via WW 1 domain). May associate with the CASA complex consisting of HSPA8, HSPB8 and BAG3. Interacts with VPS18. Phosphorylated by PKA, and by CaMK2 at multiple sites. Dephosphorylated by calcineurin at Ser-558 and Thr-605; abrogating interaction with YWHAB and impairing nuclear import.

It localises to the nucleus. Its subcellular location is the cytoplasm. The protein resides in the cytoskeleton. It is found in the myofibril. The protein localises to the sarcomere. It localises to the z line. Its subcellular location is the cell junction. The protein resides in the focal adhesion. In terms of biological role, has an actin-binding and actin-bundling activity. Can induce the formation of F-actin networks. At the sarcomeric Z lines is proposed to act as adapter protein that links nascent myofibers to the sarcolemma via ZYX and may play a role in early assembly and stabilization of the Z lines. Involved in autophagosome formation. May play a role in chaperone-assisted selective autophagy (CASA) involved in Z lines maintenance in striated muscle under mechanical tension; may link the client-processing CASA chaperone machinery to a membrane-tethering and fusion complex providing autophagosome membranes. Involved in regulation of cell migration. May be a tumor suppressor. This chain is Synaptopodin-2 (Synpo2), found in Rattus norvegicus (Rat).